The following is a 305-amino-acid chain: Acetaldehyde dehydrogenase (305 aa).

Catalysis depends on cysteine 130, which acts as the Acyl-thioester intermediate. NAD(+)-binding positions include 161 to 169 (SVGPGTRKN) and asparagine 272.

It belongs to the acetaldehyde dehydrogenase family.

It catalyses the reaction acetaldehyde + NAD(+) + CoA = acetyl-CoA + NADH + H(+). This chain is Acetaldehyde dehydrogenase, found in Leptothrix cholodnii (strain ATCC 51168 / LMG 8142 / SP-6) (Leptothrix discophora (strain SP-6)).